A 299-amino-acid polypeptide reads, in one-letter code: Prolyl 4-hydroxylase 2 (299 aa).

The Cytoplasmic portion of the chain corresponds to 1–5; that stretch reads MSMSR. A helical; Signal-anchor for type II membrane protein transmembrane segment spans residues 6-26; the sequence is LGLLLFVAILLVLLQSSTCLI. Residues 27–299 lie on the Lumenal side of the membrane; the sequence is SSPSSIINPS…GNCRRSCKAC (273 aa). The region spanning 121–246 is the Fe2OG dioxygenase domain; sequence NGEDLQVLRY…KWSATKWIHV (126 aa). Positions 139 and 141 each coordinate Fe cation. An N-linked (GlcNAc...) asparagine glycan is attached at Asn165. His227 lines the Fe cation pocket. Lys237 provides a ligand contact to 2-oxoglutarate. N-linked (GlcNAc...) asparagine glycans are attached at residues Asn258 and Asn263. The 41-residue stretch at 259 to 299 folds into the ShKT domain; sequence CTDVNESCERWAVLGECGKNPEYMVGTPEIPGNCRRSCKAC. 3 cysteine pairs are disulfide-bonded: Cys259–Cys299, Cys266–Cys292, and Cys275–Cys296.

Belongs to the P4HA family. It depends on Fe(2+) as a cofactor. L-ascorbate is required as a cofactor. Expressed in epidermal root hair cells (trichoblasts).

Its subcellular location is the endoplasmic reticulum membrane. It localises to the golgi apparatus membrane. The enzyme catalyses L-prolyl-[collagen] + 2-oxoglutarate + O2 = trans-4-hydroxy-L-prolyl-[collagen] + succinate + CO2. In terms of biological role, catalyzes the post-translational formation of 4-hydroxyproline in -Xaa-Pro-Gly- sequences in proline-rich peptide sequences of plant glycoproteins and other proteins. Hydroxyprolines are important constituent of many plant cell wall glycoproteins such as extensins, hydroxyproline-rich glycoproteins, lectins and arabinogalactan proteins. Possesses high affinity for leucine-rich repeat and proline-rich extensins of root cell walls that are essential for root hair development. Hydroxyprolines define the subsequent O-glycosylation sites by arabinosyltransferases which elongate the O-arabinosides on extensins. Has low affinity for the substrates tested in vitro. This Arabidopsis thaliana (Mouse-ear cress) protein is Prolyl 4-hydroxylase 2.